Consider the following 73-residue polypeptide: MANKEELIEFEGVVTETLPNTMFRVRLENGHEVIAHISGKMRKHYIRILTGDNVKVEMTPYDLSKGRITYRAR.

In terms of domain architecture, S1-like spans 1-73 (MANKEELIEF…SKGRITYRAR (73 aa)).

This sequence belongs to the IF-1 family. As to quaternary structure, component of the 30S ribosomal translation pre-initiation complex which assembles on the 30S ribosome in the order IF-2 and IF-3, IF-1 and N-formylmethionyl-tRNA(fMet); mRNA recruitment can occur at any time during PIC assembly.

It localises to the cytoplasm. One of the essential components for the initiation of protein synthesis. Stabilizes the binding of IF-2 and IF-3 on the 30S subunit to which N-formylmethionyl-tRNA(fMet) subsequently binds. Helps modulate mRNA selection, yielding the 30S pre-initiation complex (PIC). Upon addition of the 50S ribosomal subunit IF-1, IF-2 and IF-3 are released leaving the mature 70S translation initiation complex. This chain is Translation initiation factor IF-1, found in Acinetobacter baylyi (strain ATCC 33305 / BD413 / ADP1).